We begin with the raw amino-acid sequence, 250 residues long: Acetylglutamate kinase (250 aa).

Residues 41–42 (GG), Arg-63, and Asn-156 each bind substrate.

This sequence belongs to the acetylglutamate kinase family. ArgB subfamily.

Its subcellular location is the cytoplasm. The catalysed reaction is N-acetyl-L-glutamate + ATP = N-acetyl-L-glutamyl 5-phosphate + ADP. It functions in the pathway amino-acid biosynthesis; L-arginine biosynthesis; N(2)-acetyl-L-ornithine from L-glutamate: step 2/4. In terms of biological role, catalyzes the ATP-dependent phosphorylation of N-acetyl-L-glutamate. This Listeria monocytogenes serotype 4b (strain CLIP80459) protein is Acetylglutamate kinase.